A 465-amino-acid chain; its full sequence is Ribulose bisphosphate carboxylase large chain (465 aa).

N6,N6,N6-trimethyllysine is present on Lys-4. 2 residues coordinate substrate: Asn-113 and Thr-163. Lys-165 (proton acceptor) is an active-site residue. Position 167 (Lys-167) interacts with substrate. Lys-191, Asp-193, and Glu-194 together coordinate Mg(2+). An N6-carboxylysine modification is found at Lys-191. His-284 (proton acceptor) is an active-site residue. The substrate site is built by Arg-285, His-317, and Ser-369.

Belongs to the RuBisCO large chain family. Type I subfamily. In terms of assembly, heterohexadecamer of 8 large chains and 8 small chains; disulfide-linked. The disulfide link is formed within the large subunit homodimers. It depends on Mg(2+) as a cofactor. In terms of processing, the disulfide bond which can form in the large chain dimeric partners within the hexadecamer appears to be associated with oxidative stress and protein turnover.

The protein localises to the plastid. It is found in the chloroplast. It carries out the reaction 2 (2R)-3-phosphoglycerate + 2 H(+) = D-ribulose 1,5-bisphosphate + CO2 + H2O. The catalysed reaction is D-ribulose 1,5-bisphosphate + O2 = 2-phosphoglycolate + (2R)-3-phosphoglycerate + 2 H(+). Its function is as follows. RuBisCO catalyzes two reactions: the carboxylation of D-ribulose 1,5-bisphosphate, the primary event in carbon dioxide fixation, as well as the oxidative fragmentation of the pentose substrate in the photorespiration process. Both reactions occur simultaneously and in competition at the same active site. The protein is Ribulose bisphosphate carboxylase large chain of Bursera inaguensis (Elaphrium inaguense).